Reading from the N-terminus, the 188-residue chain is Peptidyl-tRNA hydrolase (188 aa).

Residue tyrosine 14 participates in tRNA binding. Histidine 19 serves as the catalytic Proton acceptor. The tRNA site is built by phenylalanine 64, asparagine 66, and asparagine 112.

This sequence belongs to the PTH family. Monomer.

It localises to the cytoplasm. It catalyses the reaction an N-acyl-L-alpha-aminoacyl-tRNA + H2O = an N-acyl-L-amino acid + a tRNA + H(+). In terms of biological role, hydrolyzes ribosome-free peptidyl-tRNAs (with 1 or more amino acids incorporated), which drop off the ribosome during protein synthesis, or as a result of ribosome stalling. Functionally, catalyzes the release of premature peptidyl moieties from peptidyl-tRNA molecules trapped in stalled 50S ribosomal subunits, and thus maintains levels of free tRNAs and 50S ribosomes. The polypeptide is Peptidyl-tRNA hydrolase (Enterococcus faecalis (strain ATCC 700802 / V583)).